A 156-amino-acid chain; its full sequence is Small ribosomal subunit protein uS7 (156 aa).

The protein belongs to the universal ribosomal protein uS7 family. In terms of assembly, part of the 30S ribosomal subunit. Contacts proteins S9 and S11.

One of the primary rRNA binding proteins, it binds directly to 16S rRNA where it nucleates assembly of the head domain of the 30S subunit. Is located at the subunit interface close to the decoding center, probably blocks exit of the E-site tRNA. The protein is Small ribosomal subunit protein uS7 of Citrifermentans bemidjiense (strain ATCC BAA-1014 / DSM 16622 / JCM 12645 / Bem) (Geobacter bemidjiensis).